We begin with the raw amino-acid sequence, 124 residues long: Small ribosomal subunit protein uS12 (124 aa).

Asp-89 is modified (3-methylthioaspartic acid).

Belongs to the universal ribosomal protein uS12 family. Part of the 30S ribosomal subunit. Contacts proteins S8 and S17. May interact with IF1 in the 30S initiation complex.

In terms of biological role, with S4 and S5 plays an important role in translational accuracy. Functionally, interacts with and stabilizes bases of the 16S rRNA that are involved in tRNA selection in the A site and with the mRNA backbone. Located at the interface of the 30S and 50S subunits, it traverses the body of the 30S subunit contacting proteins on the other side and probably holding the rRNA structure together. The combined cluster of proteins S8, S12 and S17 appears to hold together the shoulder and platform of the 30S subunit. This Vibrio campbellii (strain ATCC BAA-1116) protein is Small ribosomal subunit protein uS12.